A 276-amino-acid polypeptide reads, in one-letter code: Digeranylgeranylglyceryl phosphate synthase (276 aa).

The next 7 membrane-spanning stretches (helical) occupy residues 14–34 (NCIL…GHFP), 40–60 (LLIF…NDYF), 92–112 (FAVG…LGVI), 146–166 (GAVA…AFLV), 202–222 (VGVL…KASV), 224–244 (VGYY…YLIL), and 256–276 (QKLL…AAIV).

Belongs to the UbiA prenyltransferase family. DGGGP synthase subfamily. It depends on Mg(2+) as a cofactor.

The protein resides in the cell membrane. It catalyses the reaction sn-3-O-(geranylgeranyl)glycerol 1-phosphate + (2E,6E,10E)-geranylgeranyl diphosphate = 2,3-bis-O-(geranylgeranyl)-sn-glycerol 1-phosphate + diphosphate. Its pathway is membrane lipid metabolism; glycerophospholipid metabolism. Functionally, prenyltransferase that catalyzes the transfer of the geranylgeranyl moiety of geranylgeranyl diphosphate (GGPP) to the C2 hydroxyl of (S)-3-O-geranylgeranylglyceryl phosphate (GGGP). This reaction is the second ether-bond-formation step in the biosynthesis of archaeal membrane lipids. This is Digeranylgeranylglyceryl phosphate synthase from Thermococcus onnurineus (strain NA1).